The chain runs to 685 residues: MPSISMMSDAITPETLKKEKKMKSETLDSDDTVVKKEKSSSKKKEKSSSSGKKDKEEKEKKKKRKAVDLDDSSDKSDNSSELVQADDLKPKKAKVMEEAVVEAEDPNSLSNFRISKPLKDVLISKGIKALFPIQAMTFDNVIDGCDLVGRARTGQGKTLAFVLPIVESLVNGRTKDLRRSGHGRLPSVLVLLPTRELATQVLADFQVYGGAVGLTACSVYGGAPFHSQISSLTRGVDIVVGTPGRVKDLLEKGVLKLGSLLFRVLDEADEMLKMGFVDDVELILGKVDHVSKVQTLLFSATLPSWVKQISTRFLKSAKKTVDLVSDQKMKASISVRHIVIPCSASARPDLIPDIIRCYGSGGRSIIFTETKESASQLAGLLTGARPLHGDIQQTQREVTLKGFRTGKFMTLVATNVAARGLDINDVQLIIQCEPPRDVEDYIHRSGRTGRAGNTGVAVMLYDPKRSSVTKIERESGVKFEHLSAPQPVDVAKAVGIEAAAAILQISDSVIPAFKDAAEELLSTSGLSAVDILSKALAKAAGYSDIKERSLLTGMEGYVTLLLDAGRPFYGQSFAYTVLKRFLPATKADSIMGVALTADKSGAVFDVPVDDLETFLVGAENAAGVNLDVVKALPPLEEKVQISRRFGGGGRGGRGGGYGGRGGGYGGGGYGGGGGYGGRGGGYGRR.

The disordered stretch occupies residues 1–89 (MPSISMMSDA…SELVQADDLK (89 aa)). Basic and acidic residues-rich tracts occupy residues 22–42 (MKSE…SSSK) and 66–78 (AVDL…KSDN). The short motif at 107–135 (NSLSNFRISKPLKDVLISKGIKALFPIQA) is the Q motif element. The Helicase ATP-binding domain occupies 138–320 (FDNVIDGCDL…TRFLKSAKKT (183 aa)). 151–158 (ARTGQGKT) serves as a coordination point for ATP. Positions 266–269 (DEAD) match the DEAD box motif. The 143-residue stretch at 349–491 (DLIPDIIRCY…LSAPQPVDVA (143 aa)) folds into the Helicase C-terminal domain.

It belongs to the DEAD box helicase family. DDX21/DDX50 subfamily.

The protein resides in the nucleus. The catalysed reaction is ATP + H2O = ADP + phosphate + H(+). The sequence is that of DEAD-box ATP-dependent RNA helicase 7 (RH7) from Spinacia oleracea (Spinach).